Consider the following 196-residue polypeptide: dTTP/UTP pyrophosphatase (196 aa).

Residue D75 is the Proton acceptor of the active site.

Belongs to the Maf family. YhdE subfamily. A divalent metal cation is required as a cofactor.

The protein resides in the cytoplasm. The catalysed reaction is dTTP + H2O = dTMP + diphosphate + H(+). It catalyses the reaction UTP + H2O = UMP + diphosphate + H(+). Functionally, nucleoside triphosphate pyrophosphatase that hydrolyzes dTTP and UTP. May have a dual role in cell division arrest and in preventing the incorporation of modified nucleotides into cellular nucleic acids. The protein is dTTP/UTP pyrophosphatase of Wolbachia pipientis subsp. Culex pipiens (strain wPip).